A 174-amino-acid chain; its full sequence is Peptide methionine sulfoxide reductase MsrA (174 aa).

Cys11 is an active-site residue.

This sequence belongs to the MsrA Met sulfoxide reductase family.

The catalysed reaction is L-methionyl-[protein] + [thioredoxin]-disulfide + H2O = L-methionyl-(S)-S-oxide-[protein] + [thioredoxin]-dithiol. The enzyme catalyses [thioredoxin]-disulfide + L-methionine + H2O = L-methionine (S)-S-oxide + [thioredoxin]-dithiol. Its function is as follows. Has an important function as a repair enzyme for proteins that have been inactivated by oxidation. Catalyzes the reversible oxidation-reduction of methionine sulfoxide in proteins to methionine. This Pasteurella multocida (strain Pm70) protein is Peptide methionine sulfoxide reductase MsrA.